The primary structure comprises 912 residues: Serine/threonine-protein kinase D1 (912 aa).

Position 95 is a phosphotyrosine (Tyr95). The Phorbol-ester/DAG-type 1 zinc finger occupies 146–196; sequence PHALFVHSYRAPAFCDHCGEMLWGLVRQGLKCEGCGLNYHKRCAFKIPNNC. Phosphoserine is present on residues Ser205, Ser208, Ser219, and Ser223. Residues 270-320 form a Phorbol-ester/DAG-type 2 zinc finger; that stretch reads PHTFVIHSYTRPTVCQYCKKLLKGLFRQGLQCKDCRFNCHKRCAPKVPNNC. Ser345 is subject to Phosphoserine. Positions 377 to 402 are disordered; it reads NDSGEMQDPDPDHEDANRTISPSTSN. Phosphoserine; by MAPK13 is present on residues Ser397 and Ser401. A PH domain is found at 422-541; sequence TVMKEGWMVH…WEIAIQHALM (120 aa). Position 432 is a phosphotyrosine (Tyr432). Position 448 is a phosphoserine (Ser448). Position 463 is a phosphotyrosine; by ABL (Tyr463). Ser473 carries the phosphoserine modification. Tyr502 bears the Phosphotyrosine mark. Phosphoserine is present on Ser548. The region spanning 583–839 is the Protein kinase domain; that stretch reads IFPDEVLGSG…VDKTLSHPWL (257 aa). ATP contacts are provided by residues 589–597 and Lys612; that span reads LGSGQFGIV. The Proton acceptor role is filled by Asp706. Phosphoserine; by PKC/PRKCD is present on Ser738. Residue Ser742 is modified to Phosphoserine; by autocatalysis and PKC/PRKCD. Tyr749 is modified (phosphotyrosine). At Ser910 the chain carries Phosphoserine; by autocatalysis.

This sequence belongs to the protein kinase superfamily. CAMK Ser/Thr protein kinase family. PKD subfamily. As to quaternary structure, interacts (via N-terminus) with ADAP1/CENTA1. Interacts with MAPK13. Interacts with DAPK1 in an oxidative stress-regulated manner. Interacts with USP28; the interaction induces phosphorylation of USP28 and activated KRAS-mediated stabilization of ZNF304. Interacts with AKAP13 (via C-terminal domain). Mg(2+) is required as a cofactor. Post-translationally, phosphorylated at Ser-397 and Ser-401 by MAPK13 during regulation of insulin secretion in pancreatic beta cells. Phosphorylated by DAPK1. Phosphorylated at Tyr-95 and by ABL at Tyr-463, which primes the kinase in response to oxidative stress, and promotes a second step activating phosphorylation at Ser-738/Ser-742 by PKRD. Phosphorylated on Ser-910 upon S.enterica infection in macrophages.

Its subcellular location is the cytoplasm. The protein localises to the cell membrane. The protein resides in the golgi apparatus. It is found in the trans-Golgi network. It catalyses the reaction L-seryl-[protein] + ATP = O-phospho-L-seryl-[protein] + ADP + H(+). The catalysed reaction is L-threonyl-[protein] + ATP = O-phospho-L-threonyl-[protein] + ADP + H(+). Its activity is regulated as follows. Activated by DAG and phorbol esters. Phorbol-ester/DAG-type domain 1 binds DAG with high affinity and appears to play the dominant role in mediating translocation to the cell membrane and trans-Golgi network. Phorbol-ester/DAG-type domain 2 binds phorbol ester with higher affinity. Autophosphorylation of Ser-742 and phosphorylation of Ser-738 by PKC relieves auto-inhibition by the PH domain. Phosphorylation on Tyr-463 by the SRC-ABL1 pathway in response to oxidative stress, is also required for activation. Activated by DAPK1 under oxidative stress. Its function is as follows. Serine/threonine-protein kinase that converts transient diacylglycerol (DAG) signals into prolonged physiological effects downstream of PKC, and is involved in the regulation of MAPK8/JNK1 and Ras signaling, Golgi membrane integrity and trafficking, cell survival through NF-kappa-B activation, cell migration, cell differentiation by mediating HDAC7 nuclear export, cell proliferation via MAPK1/3 (ERK1/2) signaling, and plays a role in cardiac hypertrophy, VEGFA-induced angiogenesis, genotoxic-induced apoptosis and flagellin-stimulated inflammatory response. Phosphorylates the epidermal growth factor receptor (EGFR) on dual threonine residues, which leads to the suppression of epidermal growth factor (EGF)-induced MAPK8/JNK1 activation and subsequent JUN phosphorylation. Phosphorylates RIN1, inducing RIN1 binding to 14-3-3 proteins YWHAB, YWHAE and YWHAZ and increased competition with RAF1 for binding to GTP-bound form of Ras proteins (NRAS, HRAS and KRAS). Acts downstream of the heterotrimeric G-protein beta/gamma-subunit complex to maintain the structural integrity of the Golgi membranes, and is required for protein transport along the secretory pathway. In the trans-Golgi network (TGN), regulates the fission of transport vesicles that are on their way to the plasma membrane. May act by activating the lipid kinase phosphatidylinositol 4-kinase beta (PI4KB) at the TGN for the local synthesis of phosphorylated inositol lipids, which induces a sequential production of DAG, phosphatidic acid (PA) and lyso-PA (LPA) that are necessary for membrane fission and generation of specific transport carriers to the cell surface. Under oxidative stress, is phosphorylated at Tyr-463 via SRC-ABL1 and contributes to cell survival by activating IKK complex and subsequent nuclear translocation and activation of NFKB1. Involved in cell migration by regulating integrin alpha-5/beta-3 recycling and promoting its recruitment in newly forming focal adhesion. In osteoblast differentiation, mediates the bone morphogenetic protein 2 (BMP2)-induced nuclear export of HDAC7, which results in the inhibition of HDAC7 transcriptional repression of RUNX2. In neurons, plays an important role in neuronal polarity by regulating the biogenesis of TGN-derived dendritic vesicles, and is involved in the maintenance of dendritic arborization and Golgi structure in hippocampal cells. May potentiate mitogenesis induced by the neuropeptide bombesin or vasopressin by mediating an increase in the duration of MAPK1/3 (ERK1/2) signaling, which leads to accumulation of immediate-early gene products including FOS that stimulate cell cycle progression. Plays an important role in the proliferative response induced by low calcium in keratinocytes, through sustained activation of MAPK1/3 (ERK1/2) pathway. Downstream of novel PKC signaling, plays a role in cardiac hypertrophy by phosphorylating HDAC5, which in turn triggers XPO1/CRM1-dependent nuclear export of HDAC5, MEF2A transcriptional activation and induction of downstream target genes that promote myocyte hypertrophy and pathological cardiac remodeling. Mediates cardiac troponin I (TNNI3) phosphorylation at the PKA sites, which results in reduced myofilament calcium sensitivity, and accelerated crossbridge cycling kinetics. The PRKD1-HDAC5 pathway is also involved in angiogenesis by mediating VEGFA-induced specific subset of gene expression, cell migration, and tube formation. In response to VEGFA, is necessary and required for HDAC7 phosphorylation which induces HDAC7 nuclear export and endothelial cell proliferation and migration. During apoptosis induced by cytarabine and other genotoxic agents, PRKD1 is cleaved by caspase-3 at Asp-378, resulting in activation of its kinase function and increased sensitivity of cells to the cytotoxic effects of genotoxic agents. In epithelial cells, is required for transducing flagellin-stimulated inflammatory responses by binding and phosphorylating TLR5, which contributes to MAPK14/p38 activation and production of inflammatory cytokines. Acts as an activator of NLRP3 inflammasome assembly by mediating phosphorylation of NLRP3. May play a role in inflammatory response by mediating activation of NF-kappa-B. May be involved in pain transmission by directly modulating TRPV1 receptor. Plays a role in activated KRAS-mediated stabilization of ZNF304 in colorectal cancer (CRC) cells. Regulates nuclear translocation of transcription factor TFEB in macrophages upon live S.enterica infection. This is Serine/threonine-protein kinase D1 (PRKD1) from Homo sapiens (Human).